Consider the following 333-residue polypeptide: MIDTTLPLTDIHRHLDGNIRPQTILELGRQYNISLPAQSLETLIPHVQVIANEPDLVSFLTKLDWGVKVLASLDACRRVAFENIEDAARHGLHYVELRFSPGYMAMAHQLPVAGVVEAVIDGVREGCRTFGVQAKLIGIMSRTFGEAACQQELEAFLAHRDQITALDLAGDELGFPGSLFLSHFNRARDAGWHITVHAGEAAGPESIWQAIRELGAERIGHGVKAIEDRALMDFLAEQQIGIESCLTSNIQTSTVAELAAHPLKTFLEHGIRASINTDDPGVQGVDIIHEYTVAAPAAGLSREQIRQAQINGLEMAFLSAEEKRALREKVAAK.

Zn(2+) is bound by residues His12 and His14. Substrate-binding residues include His14, Asp16, and Gly170. His197 contributes to the Zn(2+) binding site. The active-site Proton donor is the Glu200. Residue Asp278 participates in Zn(2+) binding. Asp279 is a substrate binding site.

This sequence belongs to the metallo-dependent hydrolases superfamily. Adenosine and AMP deaminases family. Adenosine deaminase subfamily. The cofactor is Zn(2+).

The enzyme catalyses adenosine + H2O + H(+) = inosine + NH4(+). It carries out the reaction 2'-deoxyadenosine + H2O + H(+) = 2'-deoxyinosine + NH4(+). Functionally, catalyzes the hydrolytic deamination of adenosine and 2-deoxyadenosine. This Escherichia coli O139:H28 (strain E24377A / ETEC) protein is Adenosine deaminase.